We begin with the raw amino-acid sequence, 217 residues long: GTP-binding protein Rit2 (217 aa).

GTP is bound by residues 27-34 (GAGGVGKS), 74-78 (DTAGQ), and 133-136 (NKID).

This sequence belongs to the small GTPase superfamily. Ras family. As to quaternary structure, interacts with PLXNB3. Interacts with AFDN, the C-terminal domain of RALGDS and RLF, but not with RIN1 and PIK3CA. RLF binds exclusively to the active GTP-bound form. Binds calmodulin. Interacts with POU4F1 (via N-terminus); the interaction controls POU4F1 transactivation activity on some neuronal target genes. In terms of tissue distribution, expressed in ganglion cell layer (GCL), inner plexiform layer (IPL) and inner nuclear layer (INL) of the retina. Expressed in retinal ganglion cells (RGCs). Expressed in horizontal, bipolar and amacrine cells, but not Mueller glia, of the INL (at protein level). Neuron-specific. Expressed in ganglion cell layer (GCL) and inner plexiform layer (IPL).

It localises to the nucleus. Its subcellular location is the cell membrane. The catalysed reaction is GTP + H2O = GDP + phosphate + H(+). Its activity is regulated as follows. Alternates between an inactive form bound to GDP and an active form bound to GTP. Binds and exchanges GTP and GDP. Binds and modulates the activation of POU4F1 as gene expression regulator. The polypeptide is GTP-binding protein Rit2 (Rit2) (Mus musculus (Mouse)).